Reading from the N-terminus, the 874-residue chain is Alanine--tRNA ligase (874 aa).

The Zn(2+) site is built by histidine 564, histidine 568, cysteine 665, and histidine 669.

The protein belongs to the class-II aminoacyl-tRNA synthetase family. The cofactor is Zn(2+).

Its subcellular location is the cytoplasm. The enzyme catalyses tRNA(Ala) + L-alanine + ATP = L-alanyl-tRNA(Ala) + AMP + diphosphate. Functionally, catalyzes the attachment of alanine to tRNA(Ala) in a two-step reaction: alanine is first activated by ATP to form Ala-AMP and then transferred to the acceptor end of tRNA(Ala). Also edits incorrectly charged Ser-tRNA(Ala) and Gly-tRNA(Ala) via its editing domain. The sequence is that of Alanine--tRNA ligase from Burkholderia lata (strain ATCC 17760 / DSM 23089 / LMG 22485 / NCIMB 9086 / R18194 / 383).